Consider the following 194-residue polypeptide: Fe/S biogenesis protein NfuA (194 aa).

The [4Fe-4S] cluster site is built by Cys151 and Cys154.

This sequence belongs to the NfuA family. In terms of assembly, homodimer. It depends on [4Fe-4S] cluster as a cofactor.

Its function is as follows. Involved in iron-sulfur cluster biogenesis. Binds a 4Fe-4S cluster, can transfer this cluster to apoproteins, and thereby intervenes in the maturation of Fe/S proteins. Could also act as a scaffold/chaperone for damaged Fe/S proteins. In Pasteurella multocida (strain Pm70), this protein is Fe/S biogenesis protein NfuA.